Consider the following 202-residue polypeptide: Protein GrpE (202 aa).

A compositionally biased stretch (polar residues) spans 1 to 14 (MENTQENPTSQNPT). The disordered stretch occupies residues 1–58 (MENTQENPTSQNPTPADEAARQAAEAASGEPQDQARQPAAAAGEQPAQAQPAGAEAAL). Residues 21 to 58 (RQAAEAASGEPQDQARQPAAAAGEQPAQAQPAGAEAAL) are compositionally biased toward low complexity.

Belongs to the GrpE family. As to quaternary structure, homodimer.

It localises to the cytoplasm. Participates actively in the response to hyperosmotic and heat shock by preventing the aggregation of stress-denatured proteins, in association with DnaK and GrpE. It is the nucleotide exchange factor for DnaK and may function as a thermosensor. Unfolded proteins bind initially to DnaJ; upon interaction with the DnaJ-bound protein, DnaK hydrolyzes its bound ATP, resulting in the formation of a stable complex. GrpE releases ADP from DnaK; ATP binding to DnaK triggers the release of the substrate protein, thus completing the reaction cycle. Several rounds of ATP-dependent interactions between DnaJ, DnaK and GrpE are required for fully efficient folding. The polypeptide is Protein GrpE (Paraburkholderia phymatum (strain DSM 17167 / CIP 108236 / LMG 21445 / STM815) (Burkholderia phymatum)).